Consider the following 554-residue polypeptide: (Z)-gamma-bisabolene synthase 1 (554 aa).

Residues Asp306, Asp310, Asp450, and Asp458 each contribute to the Mg(2+) site. The DDXXD motif signature appears at 306-310; sequence DDACD.

The protein belongs to the terpene synthase family. Tpsa subfamily. It depends on Mg(2+) as a cofactor. The cofactor is Mn(2+). In terms of tissue distribution, predominantly expressed in roots. Expressed in the cortex and the sub-epidermal layers of roots. Also detected in leaf hydathodes and flower stigmata.

The protein resides in the cytoplasm. It catalyses the reaction (2E,6E)-farnesyl diphosphate = (Z)-gamma-bisabolene + diphosphate. Its pathway is secondary metabolite biosynthesis; terpenoid biosynthesis. Its function is as follows. Involved in sesquiterpene (C15) biosynthesis. The major product is (Z)-gamma-bisabolene with minor amounts of (E)-nerolidol and alpha-bisabolol. This chain is (Z)-gamma-bisabolene synthase 1 (TPS12), found in Arabidopsis thaliana (Mouse-ear cress).